The following is a 399-amino-acid chain: Enoyl-[acyl-carrier-protein] reductase [NADH] (399 aa).

Residues 48–53 (GASTGY), 74–75 (FE), 111–112 (DA), and 139–140 (LA) contribute to the NAD(+) site. Tyr225 is a binding site for substrate. Catalysis depends on Tyr235, which acts as the Proton donor. NAD(+) is bound by residues Lys244 and 274-276 (VVT).

The protein belongs to the TER reductase family. Monomer.

The catalysed reaction is a 2,3-saturated acyl-[ACP] + NAD(+) = a (2E)-enoyl-[ACP] + NADH + H(+). It functions in the pathway lipid metabolism; fatty acid biosynthesis. Functionally, involved in the final reduction of the elongation cycle of fatty acid synthesis (FAS II). Catalyzes the reduction of a carbon-carbon double bond in an enoyl moiety that is covalently linked to an acyl carrier protein (ACP). This chain is Enoyl-[acyl-carrier-protein] reductase [NADH], found in Yersinia pestis bv. Antiqua (strain Antiqua).